A 1141-amino-acid polypeptide reads, in one-letter code: DNA polymerase II large subunit (1141 aa).

A disordered region spans residues 567 to 587 (AGTRVGGRMGRPGKSAPRKMK).

Belongs to the archaeal DNA polymerase II family. In terms of assembly, heterodimer of a large subunit and a small subunit.

It catalyses the reaction DNA(n) + a 2'-deoxyribonucleoside 5'-triphosphate = DNA(n+1) + diphosphate. The catalysed reaction is Exonucleolytic cleavage in the 3'- to 5'-direction to yield nucleoside 5'-phosphates.. Possesses two activities: a DNA synthesis (polymerase) and an exonucleolytic activity that degrades single-stranded DNA in the 3'- to 5'-direction. Has a template-primer preference which is characteristic of a replicative DNA polymerase. The chain is DNA polymerase II large subunit from Methanocorpusculum labreanum (strain ATCC 43576 / DSM 4855 / Z).